The primary structure comprises 735 residues: Photosystem I P700 chlorophyll a apoprotein A2 (735 aa).

The next 8 helical transmembrane spans lie at Leu-46–Ala-69, Leu-135–Gln-158, Leu-175–Ile-199, Ile-273–Tyr-291, Leu-333–Tyr-356, Ala-372–Ile-398, Ala-420–His-442, and Phe-518–Val-536. 2 residues coordinate [4Fe-4S] cluster: Cys-560 and Cys-569. A run of 2 helical transmembrane segments spans residues Ala-576–Trp-597 and Leu-644–Ile-666. The chlorophyll a site is built by His-655, Met-663, and Tyr-671. Trp-672 is a binding site for phylloquinone. Residues Val-708 to Ala-728 form a helical membrane-spanning segment.

This sequence belongs to the PsaA/PsaB family. In terms of assembly, the PsaA/B heterodimer binds the P700 chlorophyll special pair and subsequent electron acceptors. PSI consists of a core antenna complex that captures photons, and an electron transfer chain that converts photonic excitation into a charge separation. The cyanobacterial PSI reaction center is composed of one copy each of PsaA,B,C,D,E,F,I,J,K,L,M and X, and forms trimeric complexes. Requires PSI electron transfer chain: 5 chlorophyll a, 1 chlorophyll a', 2 phylloquinones and 3 4Fe-4S clusters. PSI core antenna: 90 chlorophyll a, 22 carotenoids, 3 phospholipids and 1 galactolipid. P700 is a chlorophyll a/chlorophyll a' dimer, A0 is one or more chlorophyll a, A1 is one or both phylloquinones and FX is a shared 4Fe-4S iron-sulfur center. as cofactor.

The protein localises to the cellular thylakoid membrane. The catalysed reaction is reduced [plastocyanin] + hnu + oxidized [2Fe-2S]-[ferredoxin] = oxidized [plastocyanin] + reduced [2Fe-2S]-[ferredoxin]. PsaA and PsaB bind P700, the primary electron donor of photosystem I (PSI), as well as the electron acceptors A0, A1 and FX. PSI is a plastocyanin/cytochrome c6-ferredoxin oxidoreductase, converting photonic excitation into a charge separation, which transfers an electron from the donor P700 chlorophyll pair to the spectroscopically characterized acceptors A0, A1, FX, FA and FB in turn. Oxidized P700 is reduced on the lumenal side of the thylakoid membrane by plastocyanin or cytochrome c6. The protein is Photosystem I P700 chlorophyll a apoprotein A2 of Synechococcus sp. (strain CC9902).